Consider the following 254-residue polypeptide: Large ribosomal subunit protein uL2B (254 aa).

Lysine 46 participates in a covalent cross-link: Glycyl lysine isopeptide (Lys-Gly) (interchain with G-Cter in ubiquitin). Serine 52 bears the Phosphoserine mark. Lysine 93 is covalently cross-linked (Glycyl lysine isopeptide (Lys-Gly) (interchain with G-Cter in ubiquitin)). Serine 95 bears the Phosphoserine mark. Residues lysine 119 and lysine 145 each participate in a glycyl lysine isopeptide (Lys-Gly) (interchain with G-Cter in ubiquitin) cross-link. Phosphoserine is present on residues serine 159, serine 160, and serine 249.

It belongs to the universal ribosomal protein uL2 family. In terms of assembly, component of the large ribosomal subunit (LSU). Mature yeast ribosomes consist of a small (40S) and a large (60S) subunit. The 40S small subunit contains 1 molecule of ribosomal RNA (18S rRNA) and 33 different proteins (encoded by 57 genes). The large 60S subunit contains 3 rRNA molecules (25S, 5.8S and 5S rRNA) and 46 different proteins (encoded by 81 genes).

The protein resides in the cytoplasm. Its function is as follows. Component of the ribosome, a large ribonucleoprotein complex responsible for the synthesis of proteins in the cell. The small ribosomal subunit (SSU) binds messenger RNAs (mRNAs) and translates the encoded message by selecting cognate aminoacyl-transfer RNA (tRNA) molecules. The large subunit (LSU) contains the ribosomal catalytic site termed the peptidyl transferase center (PTC), which catalyzes the formation of peptide bonds, thereby polymerizing the amino acids delivered by tRNAs into a polypeptide chain. The nascent polypeptides leave the ribosome through a tunnel in the LSU and interact with protein factors that function in enzymatic processing, targeting, and the membrane insertion of nascent chains at the exit of the ribosomal tunnel. This is Large ribosomal subunit protein uL2B from Saccharomyces cerevisiae (strain ATCC 204508 / S288c) (Baker's yeast).